The sequence spans 584 residues: Proteasome-associated ATPase (584 aa).

The stretch at 16–91 (EELASQVRLL…KEEVDRLAQP (76 aa)) forms a coiled coil. 273–278 (GCGKTL) provides a ligand contact to ATP. The interval 583–584 (YL) is docks into pockets in the proteasome alpha-ring.

This sequence belongs to the AAA ATPase family. As to quaternary structure, homohexamer. Assembles into a hexameric ring structure that caps the 20S proteasome core. Strongly interacts with the prokaryotic ubiquitin-like protein Pup through a hydrophobic interface; the interacting region of ARC lies in its N-terminal coiled-coil domain. There is one Pup binding site per ARC hexamer ring. Upon ATP-binding, the C-terminus of ARC interacts with the alpha-rings of the proteasome core, possibly by binding to the intersubunit pockets.

Its pathway is protein degradation; proteasomal Pup-dependent pathway. ATPase which is responsible for recognizing, binding, unfolding and translocation of pupylated proteins into the bacterial 20S proteasome core particle. May be essential for opening the gate of the 20S proteasome via an interaction with its C-terminus, thereby allowing substrate entry and access to the site of proteolysis. Thus, the C-termini of the proteasomal ATPase may function like a 'key in a lock' to induce gate opening and therefore regulate proteolysis. The sequence is that of Proteasome-associated ATPase from Nocardioides sp. (strain ATCC BAA-499 / JS614).